We begin with the raw amino-acid sequence, 310 residues long: Transcription initiation factor IIB (310 aa).

A TFIIB-type zinc finger spans residues 9–41; sequence EKETKCPECGSDDLRGDYERAEIVCGKCGLVID. Residues C14, C17, C33, and C36 each coordinate Zn(2+). 2 repeat units span residues 127–210 and 221–302.

It belongs to the TFIIB family.

Stabilizes TBP binding to an archaeal box-A promoter. Also responsible for recruiting RNA polymerase II to the pre-initiation complex (DNA-TBP-TFIIB). In Methanothermobacter thermautotrophicus (strain ATCC 29096 / DSM 1053 / JCM 10044 / NBRC 100330 / Delta H) (Methanobacterium thermoautotrophicum), this protein is Transcription initiation factor IIB.